The chain runs to 451 residues: PTS system cellobiose-specific EIIC component (451 aa).

One can recognise a PTS EIIC type-3 domain in the interval 8 to 423 (LEDRVMPVAG…FIAFAIYYPF (416 aa)). Helical transmembrane passes span 31 to 51 (GIIL…VGFL), 72 to 92 (LLYP…FGVA), 104 to 124 (LSAG…QVPF), 138 to 158 (GIPV…LAIV), 187 to 207 (FVAL…RLIL), 227 to 247 (LSVL…VQLL), 250 to 270 (TGLH…LSLM), 293 to 313 (FFDL…ALTM), 347 to 367 (IVMN…LVVV), and 407 to 427 (ILQI…FSIW).

It localises to the cell membrane. Functionally, the phosphoenolpyruvate-dependent sugar phosphotransferase system (sugar PTS), a major carbohydrate active transport system, catalyzes the phosphorylation of incoming sugar substrates concomitantly with their translocation across the cell membrane. The enzyme II CelABD PTS system is involved in cellobiose transport. The polypeptide is PTS system cellobiose-specific EIIC component (Geobacillus stearothermophilus (Bacillus stearothermophilus)).